Consider the following 61-residue polypeptide: MAKKSQIAKQKRGAKFNVQNYTRCERCGRPHSVYRKFHLCRICLRDLAHKGQIPGMKKASW.

C24, C27, C40, and C43 together coordinate Zn(2+).

This sequence belongs to the universal ribosomal protein uS14 family. Zinc-binding uS14 subfamily. Part of the 30S ribosomal subunit. Contacts proteins S3 and S10. Requires Zn(2+) as cofactor.

Functionally, binds 16S rRNA, required for the assembly of 30S particles and may also be responsible for determining the conformation of the 16S rRNA at the A site. The sequence is that of Small ribosomal subunit protein uS14B from Lactiplantibacillus plantarum (strain ATCC BAA-793 / NCIMB 8826 / WCFS1) (Lactobacillus plantarum).